A 566-amino-acid chain; its full sequence is Tissue-type plasminogen activator (566 aa).

The first 21 residues, 1 to 21 (MMSAMKTEFLCVLLLCGAVFT), serve as a signal peptide directing secretion. A propeptide spanning residues 22-33 (SPSQETYRRLRR) is cleaved from the precursor. The propeptide at 34–36 (GAR) is removed by plasmin. The 43-residue stretch at 40–82 (VTCRDGKTQMTYRQHDSWLRPLLRGNQVEHCWCDGGRAQCHSV) folds into the Fibronectin type-I domain. 17 disulfides stabilise this stretch: Cys42–Cys72, Cys70–Cys79, Cys87–Cys98, Cys92–Cys109, Cys111–Cys120, Cys128–Cys209, Cys149–Cys191, Cys180–Cys204, Cys219–Cys300, Cys240–Cys282, Cys271–Cys295, Cys303–Cys434, Cys346–Cys362, Cys354–Cys423, Cys448–Cys523, Cys480–Cys496, and Cys513–Cys541. The important for binding to annexin A2 stretch occupies residues 43–53 (RDGKTQMTYRQ). The region spanning 83 to 121 (PVRSCSEPWCFNGGTCRQALYSSDFVCQCPEGFMGKLCE) is the EGF-like domain. Kringle domains lie at 128–209 (CYKD…TPAC) and 219–300 (CYTG…VPQC). Asn153 is a glycosylation site (N-linked (GlcNAc...) asparagine). Positions 315 to 565 (IKGGLFADIT…YLDWIRDNTR (251 aa)) constitute a Peptidase S1 domain. Active-site charge relay system residues include His361 and Asp410. The N-linked (GlcNAc...) asparagine glycan is linked to Asn487. Ser517 functions as the Charge relay system in the catalytic mechanism.

The protein belongs to the peptidase S1 family. In terms of assembly, heterodimer of chain A and chain B held by a disulfide bond. Binds to fibrin with high affinity. This interaction leads to an increase in the catalytic efficiency of the enzyme due to an increase in affinity for plasminogen. Similarly, binding to heparin increases the activation of plasminogen. Binds to annexin A2, cytokeratin-8, fibronectin and laminin. Binds to mannose receptor and the low-density lipoprotein receptor-related protein (LRP1); these proteins are involved in TPA clearance. Binds LRP1B; binding is followed by internalization and degradation. Forms heterodimer with SERPINA5. Interacts with SERPINE1. In complex with SERPINE1, interacts with SORL1. Post-translationally, the single chain, almost fully active enzyme, can be further processed into a two-chain fully active form by a cleavage after Arg-314 catalyzed by plasmin, tissue kallikrein or factor Xa.

The protein resides in the secreted. The protein localises to the extracellular space. The catalysed reaction is Specific cleavage of Arg-|-Val bond in plasminogen to form plasmin.. Inhibited by SERPINA5. Inhibited by SERPINE1. Functionally, converts the abundant, but inactive, zymogen plasminogen to plasmin by hydrolyzing a single Arg-Val bond in plasminogen. By controlling plasmin-mediated proteolysis, it plays an important role in tissue remodeling and degradation, in cell migration and many other physiopathological events. During oocyte activation, plays a role in cortical granule reaction in the zona reaction, which contributes to the block to polyspermy. The chain is Tissue-type plasminogen activator (PLAT) from Bos taurus (Bovine).